An 883-amino-acid chain; its full sequence is EEF1AKMT4-ECE2 readthrough transcript protein (883 aa).

Residues 1 to 160 (MASPGAGRAP…VHTVDQVLSE (160 aa)) form a methyltransferase-like region region. Residues 1–178 (MASPGAGRAP…QLLGSRTQLE (178 aa)) are Cytoplasmic-facing. Residues Trp-26 and Tyr-30 each contribute to the S-adenosyl-L-methionine site. A Phosphotyrosine modification is found at Tyr-39. S-adenosyl-L-methionine-binding positions include Trp-41, Gly-66, 88–89 (DY), 113–114 (DV), and Lys-130. A helical transmembrane segment spans residues 179-199 (LVLAGASLLLAALLLGCLVAL). Residues 200–883 (GVQYHRDPSH…MNPGQLCEVW (684 aa)) lie on the Lumenal side of the membrane. Positions 211-883 (TCLTEACIRV…MNPGQLCEVW (673 aa)) constitute a Peptidase M13 domain. 5 disulfides stabilise this stretch: Cys-212–Cys-217, Cys-235–Cys-868, Cys-243–Cys-828, Cys-299–Cys-548, and Cys-757–Cys-880. N-linked (GlcNAc...) asparagine glycosylation is found at Asn-279, Asn-283, Asn-324, Asn-384, Asn-429, Asn-496, and Asn-652. His-720 provides a ligand contact to Zn(2+). Glu-721 is an active-site residue. Zn(2+) is bound at residue His-724. 2 N-linked (GlcNAc...) asparagine glycosylation sites follow: Asn-745 and Asn-753. Glu-780 contacts Zn(2+). Residue Asp-784 is the Proton donor of the active site.

The protein in the N-terminal section; belongs to the methyltransferase superfamily. This sequence in the C-terminal section; belongs to the peptidase M13 family. The cofactor is Zn(2+).

Its subcellular location is the golgi apparatus membrane. It is found in the cytoplasmic vesicle. The protein localises to the secretory vesicle membrane. It catalyses the reaction Hydrolysis of the 21-Trp-|-Val-22 bond in big endothelin to form endothelin 1.. Inhibited by phosphoramidon. In terms of biological role, converts big endothelin-1 to endothelin-1. May also have methyltransferase activity. May play a role in amyloid-beta processing. This Homo sapiens (Human) protein is EEF1AKMT4-ECE2 readthrough transcript protein.